The sequence spans 575 residues: RecBCD enzyme subunit RecD (575 aa).

An ATP-binding site is contributed by glycine 170–threonine 177.

The protein belongs to the RecD family. In terms of assembly, heterotrimer of RecB, RecC and RecD. All subunits contribute to DNA-binding.

It catalyses the reaction Couples ATP hydrolysis with the unwinding of duplex DNA at the replication fork by translocating in the 5'-3' direction. This creates two antiparallel DNA single strands (ssDNA). The leading ssDNA polymer is the template for DNA polymerase III holoenzyme which synthesizes a continuous strand.. It carries out the reaction ATP + H2O = ADP + phosphate + H(+). A helicase/nuclease that prepares dsDNA breaks (DSB) for recombinational DNA repair. Binds to DSBs and unwinds DNA via a highly rapid and processive ATP-dependent bidirectional helicase activity. Holoenzyme degrades any linearized DNA that is unable to undergo homologous recombination. In the holoenzyme this subunit has ssDNA-dependent ATPase and 5'-3' helicase activity. When added to pre-assembled RecBC greatly stimulates nuclease activity and augments holoenzyme processivity. Unlike the case in E.coli, suppresses RecA-dependent homologous recombination, is instead required for single-strand annealing pathway repair of DSB. In terms of biological role, a helicase/nuclease that prepares dsDNA breaks (DSB) for recombinational DNA repair. Binds to DSBs and unwinds DNA via a highly rapid and processive ATP-dependent bidirectional helicase activity. Unwinds dsDNA until it encounters a Chi (crossover hotspot instigator) sequence from the 3' direction. Cuts ssDNA a few nucleotides 3' to the Chi site. The properties and activities of the enzyme are changed at Chi. The Chi-altered holoenzyme produces a long 3'-ssDNA overhang and facilitates RecA-binding to the ssDNA for homologous DNA recombination and repair. Holoenzyme degrades any linearized DNA that is unable to undergo homologous recombination. In the holoenzyme this subunit has ssDNA-dependent ATPase and 5'-3' helicase activity. When added to pre-assembled RecBC greatly stimulates nuclease activity and augments holoenzyme processivity. Negatively regulates the RecA-loading ability of RecBCD. The polypeptide is RecBCD enzyme subunit RecD (Mycobacterium tuberculosis (strain CDC 1551 / Oshkosh)).